Reading from the N-terminus, the 115-residue chain is Phosphoribosyl-ATP pyrophosphatase (115 aa).

This sequence belongs to the PRA-PH family.

It is found in the cytoplasm. The enzyme catalyses 1-(5-phospho-beta-D-ribosyl)-ATP + H2O = 1-(5-phospho-beta-D-ribosyl)-5'-AMP + diphosphate + H(+). The protein operates within amino-acid biosynthesis; L-histidine biosynthesis; L-histidine from 5-phospho-alpha-D-ribose 1-diphosphate: step 2/9. The polypeptide is Phosphoribosyl-ATP pyrophosphatase (Bordetella parapertussis (strain 12822 / ATCC BAA-587 / NCTC 13253)).